Reading from the N-terminus, the 232-residue chain is UPF0235 protein At5g63440 (232 aa).

It belongs to the UPF0235 family. As to quaternary structure, interacts with CTN.

It localises to the nucleus speckle. Its function is as follows. May play a role during early embryonic development. Probably involved in pre-mRNA splicing. This Arabidopsis thaliana (Mouse-ear cress) protein is UPF0235 protein At5g63440.